A 105-amino-acid polypeptide reads, in one-letter code: Thiosulfate sulfurtransferase GlpE (105 aa).

The 89-residue stretch at 15-103 folds into the Rhodanese domain; it reads MQQGAILVDI…WCRAELPIDT (89 aa). The active-site Cysteine persulfide intermediate is cysteine 63.

Belongs to the GlpE family.

Its subcellular location is the cytoplasm. It catalyses the reaction thiosulfate + hydrogen cyanide = thiocyanate + sulfite + 2 H(+). It carries out the reaction thiosulfate + [thioredoxin]-dithiol = [thioredoxin]-disulfide + hydrogen sulfide + sulfite + 2 H(+). In terms of biological role, transferase that catalyzes the transfer of sulfur from thiosulfate to thiophilic acceptors such as cyanide or dithiols. May function in a CysM-independent thiosulfate assimilation pathway by catalyzing the conversion of thiosulfate to sulfite, which can then be used for L-cysteine biosynthesis. The chain is Thiosulfate sulfurtransferase GlpE from Haemophilus influenzae (strain PittEE).